Reading from the N-terminus, the 473-residue chain is Peptidoglycan DL-endopeptidase CwlO (473 aa).

The signal sequence occupies residues 1-30 (MRKSLITLGLASVIGTSSFLIPFTSKTASA). Disordered stretches follow at residues 31-52 (ETLD…SSIE), 79-98 (ALDT…KTKE), and 237-337 (EASE…GTVI). Residues 33–44 (LDEKKQKIESKQ) are compositionally biased toward basic and acidic residues. A compositionally biased stretch (polar residues) spans 241–250 (LANQKANTEA). 2 stretches are compositionally biased toward basic and acidic residues: residues 251–260 (EQARIKKEQE) and 267–277 (KKQEEAQKASD). The span at 291–337 (SSKASSSDDSSDNSSDNSSNGSSNSSSNGSSSKKSSGSNSNSGGTVI) shows a compositional bias: low complexity. Positions 340–471 (SGGIEGAISV…AAFKGVVRRV (132 aa)) constitute a NlpC/P60 domain. Catalysis depends on cysteine 377, which acts as the Nucleophile. Histidine 431 acts as the Proton acceptor in catalysis. Asparagine 443 is an active-site residue.

The protein belongs to the peptidase C40 family. Post-translationally, identified in the extracellular proteome as a number of processing products of about 50 and 30 kDa.

Its subcellular location is the secreted. It localises to the cell wall. With respect to regulation, detected in exponentially growing cells, the 50 and 30 kDa processing products disappear upon entry into stationary phase with the concomitant appearance of a 20 kDa products. The 50 kDa form persists in the absence of extracellular proteases. Functionally, the C-terminal part of CwlO shows a cell wall hydrolytic DL-endopeptidase activity. The chain is Peptidoglycan DL-endopeptidase CwlO (cwlO) from Bacillus subtilis (strain 168).